Here is a 301-residue protein sequence, read N- to C-terminus: Sulfate adenylyltransferase subunit 2 (301 aa).

Belongs to the PAPS reductase family. CysD subfamily. Heterodimer composed of CysD, the smaller subunit, and CysN.

It carries out the reaction sulfate + ATP + H(+) = adenosine 5'-phosphosulfate + diphosphate. It functions in the pathway sulfur metabolism; hydrogen sulfide biosynthesis; sulfite from sulfate: step 1/3. Its function is as follows. With CysN forms the ATP sulfurylase (ATPS) that catalyzes the adenylation of sulfate producing adenosine 5'-phosphosulfate (APS) and diphosphate, the first enzymatic step in sulfur assimilation pathway. APS synthesis involves the formation of a high-energy phosphoric-sulfuric acid anhydride bond driven by GTP hydrolysis by CysN coupled to ATP hydrolysis by CysD. The chain is Sulfate adenylyltransferase subunit 2 from Shewanella woodyi (strain ATCC 51908 / MS32).